The chain runs to 174 residues: Variant surface antigen F (174 aa).

An N-terminal signal peptide occupies residues 1 to 29 (MKKSIFSKKLLFSFGSLVALAAIPLITIS). Cys-30 carries N-palmitoyl cysteine lipidation. Cys-30 carries the S-diacylglycerol cysteine lipid modification. The tract at residues 32–174 (QTNTDQSQQP…PEQGNSQVSK (143 aa)) is disordered. The segment covering 43-53 (SGSGSGSGTSN) has biased composition (gly residues). 9 consecutive repeat copies span residues 55–67 (SGSTPTPEQGNNQ), 68–80 (GGSTPTPEQGNNQ), 81–93 (GGSTPTPEQGNNQ), 94–106 (GGSTPTPEQGNNQ), 107–119 (GGSTPTPEQGNNQ), 120–132 (GGSTPTPEQGNNQ), 133–145 (GGSTPTPEQGNNQ), 146–158 (GGSTPTPEQGNNQ), and 159–171 (GGSTPTPEQGNSQ). The interval 55-171 (SGSTPTPEQG…TPTPEQGNSQ (117 aa)) is 9 X 13 AA tandem repeats. Residues 62–174 (EQGNNQGGST…PEQGNSQVSK (113 aa)) are compositionally biased toward polar residues.

Its subcellular location is the cell membrane. Its function is as follows. Responsible for the antigenic diversity for host adaptation. Expression in E.coli of a construct containing vlpD, vlpE, and vlpF yields antigenically distinguishable products corresponding to each gene. The polypeptide is Variant surface antigen F (vlpF) (Mesomycoplasma hyorhinis (Mycoplasma hyorhinis)).